The following is an 88-amino-acid chain: MSEAIENRNGRALVGVVVSDKNDKTIVVRVETLVKHPLLKKYIRRRKKFTAHDPNNECKVGDKVKIIEFRPVSRNKRWHLVSILEKAV.

Belongs to the universal ribosomal protein uS17 family. As to quaternary structure, part of the 30S ribosomal subunit.

Its function is as follows. One of the primary rRNA binding proteins, it binds specifically to the 5'-end of 16S ribosomal RNA. This is Small ribosomal subunit protein uS17 from Oleidesulfovibrio alaskensis (strain ATCC BAA-1058 / DSM 17464 / G20) (Desulfovibrio alaskensis).